The sequence spans 274 residues: MAIHLYKTSTPSTRNGTVDSQVKSNPRNNLIYGQHHCGKGRNARGIITARHRGGGHKRLYRKIDFRRNEKDIYGRIVTIEYDPNRNAYICLIHYGDGEKRYILHPRGAIIGDTIVSGTEVPIKMGNALPLTDMPLGTAIHNIEITLGKGGQLARAAGAVAKLIAKEGKSATLKLPSGEVRLISKNCSATVGQVGNVGVNQKSLGRAGSKRWLGKRPVVRGVVMNPVDHPHGGGEGRAPIGRKKPTTPWGYPALGRRSRKRNKYSDNLILRRRSK.

Disordered regions lie at residues 1–24 (MAIH…QVKS) and 223–274 (MNPV…RRSK). The span at 7–24 (KTSTPSTRNGTVDSQVKS) shows a compositional bias: polar residues.

This sequence belongs to the universal ribosomal protein uL2 family. As to quaternary structure, part of the 50S ribosomal subunit.

The protein localises to the plastid. It is found in the chloroplast. The polypeptide is Large ribosomal subunit protein uL2cz/uL2cy (rpl2-A) (Nicotiana sylvestris (Wood tobacco)).